The following is a 203-amino-acid chain: Large ribosomal subunit protein bL25 (203 aa).

This sequence belongs to the bacterial ribosomal protein bL25 family. CTC subfamily. In terms of assembly, part of the 50S ribosomal subunit; part of the 5S rRNA/L5/L18/L25 subcomplex. Contacts the 5S rRNA. Binds to the 5S rRNA independently of L5 and L18.

Its function is as follows. This is one of the proteins that binds to the 5S RNA in the ribosome where it forms part of the central protuberance. The polypeptide is Large ribosomal subunit protein bL25 (Xanthobacter autotrophicus (strain ATCC BAA-1158 / Py2)).